The chain runs to 326 residues: Ras association domain-containing protein 2 (326 aa).

Residues 176–264 form the Ras-associating domain; the sequence is YNHKTSVFTP…SKVFLMEKDQ (89 aa). An SARAH domain is found at 272-319; it reads VAQYIKFEMPVLKSFIQKLQEEEDREVEKLMRKYTVLRLMIRQRLEEI.

As to quaternary structure, interacts directly with activated KRAS in a GTP-dependent manner. Interacts (via SARAH domain) with STK3/MST2 and STK4/MST1. Phosphorylated by STK3/MST2 and STK4/MST1.

It localises to the nucleus. The protein localises to the cytoplasm. Its subcellular location is the chromosome. It is found in the centromere. The protein resides in the kinetochore. Functionally, potential tumor suppressor. Acts as a KRAS-specific effector protein. May promote apoptosis and cell cycle arrest. Stabilizes STK3/MST2 by protecting it from proteasomal degradation. This Mus musculus (Mouse) protein is Ras association domain-containing protein 2 (Rassf2).